The primary structure comprises 632 residues: 2-hydroxyacyl-CoA lyase 2 (632 aa).

The helical transmembrane segment at 13-33 (FFPSFLLLAFGTLVAAVLGVA) threads the bilayer. Glutamate 98 provides a ligand contact to thiamine diphosphate. The residue at position 369 (serine 369) is a Phosphoserine. The interval 470-550 (DFVATAAYLV…VIALVGNDAG (81 aa)) is thiamine pyrophosphate binding. Residues aspartate 521 and asparagine 547 each contribute to the Mg(2+) site.

The protein belongs to the TPP enzyme family. Mg(2+) serves as cofactor. Thiamine diphosphate is required as a cofactor.

The protein resides in the endoplasmic reticulum membrane. The catalysed reaction is 2-hydroxyoctadecanoyl-CoA = heptadecanal + formyl-CoA. It catalyses the reaction (2R)-hydroxyhexadecanoyl-CoA = pentadecanal + formyl-CoA. Functionally, endoplasmic reticulum 2-OH acyl-CoA lyase involved in the cleavage (C1 removal) reaction in the fatty acid alpha-oxydation in a thiamine pyrophosphate (TPP)-dependent manner. Involved in the phytosphingosine degradation pathway. This Mus musculus (Mouse) protein is 2-hydroxyacyl-CoA lyase 2 (Ilvbl).